The sequence spans 343 residues: Olfactory receptor 1E3 (343 aa).

The Extracellular segment spans residues 1–28; the sequence is MMKKNQTMISEFLLLGLPIQPEQQNLFY. An N-linked (GlcNAc...) asparagine glycan is attached at N5. A helical transmembrane segment spans residues 29–49; it reads ALFLAVYLTTLLGNLLVIVLI. Residues 50–107 are Cytoplasmic-facing; sequence RLDSHLHMPMYLCLSNLSFSDLCFSSVTMPKLLQNMQSQNPSIPFADCLAQMYFHLFY. Residues C97 and C179 are joined by a disulfide bond. Residues 108–128 traverse the membrane as a helical segment; it reads GVLESFLLVVMAYHCYVAICF. Residues 129–141 lie on the Extracellular side of the membrane; it reads PLHYTTIMSPKCC. Residues 142–162 form a helical membrane-spanning segment; the sequence is LGLLTLSWLLTTAHATLHTLL. Residues 163 to 195 are Cytoplasmic-facing; sequence MARLSFCAENVIPHFFCDTSTLLKLACSNTQVN. A helical transmembrane segment spans residues 196-216; it reads GWVMFFMGGLILVIPFLLLIM. At 217–242 the chain is on the extracellular side; the sequence is SCARIVSTILRVPSTGGIQKAFSTCG. A helical membrane pass occupies residues 243 to 263; it reads PHLSVVSLFYGTIIGLYLCPL. Topologically, residues 264–271 are cytoplasmic; the sequence is TNHNTVKD. Residues 272–292 form a helical membrane-spanning segment; the sequence is TVMAVMYTGVTHMLNPFIYSL. Over 293–310 the chain is Extracellular; it reads RNRDMRGNPGQSLQHKEN. Residues 311–331 form a helical membrane-spanning segment; that stretch reads FFVFKIVIVGILPLLNLVGVV. At 332 to 343 the chain is on the cytoplasmic side; it reads KLIMKYHSKSVA.

Belongs to the G-protein coupled receptor 1 family.

The protein localises to the cell membrane. Its function is as follows. Odorant receptor. The chain is Olfactory receptor 1E3 (OR1E3) from Homo sapiens (Human).